Here is a 142-residue protein sequence, read N- to C-terminus: Hemoglobin subunit alpha-4 (142 aa).

Ser1 carries the post-translational modification N-acetylserine. One can recognise a Globin domain in the interval 1 to 142 (SLSAKDKANV…LALALAEKYR (142 aa)). His59 is an O2 binding site. His88 contributes to the heme b binding site.

It belongs to the globin family. Heterotetramer of two alpha chains and two beta chains. In terms of tissue distribution, red blood cells.

In terms of biological role, involved in oxygen transport from gills to the various peripheral tissues. The polypeptide is Hemoglobin subunit alpha-4 (hba4) (Oncorhynchus mykiss (Rainbow trout)).